The sequence spans 311 residues: Transcriptional regulatory protein MoaR1 (311 aa).

The ompR/PhoB-type DNA-binding region spans 15-117 (LNATTAGAVQ…SEPPGYRLLI (103 aa)).

This sequence belongs to the AfsR/DnrI/RedD regulatory family.

In terms of biological role, acts as a positive transcriptional regulator of the molybdopterin biosynthesis moa1 locus, promoting the expression of the moaA1B1C1D1 genes. Binds directly to the moaA1 promoter. The protein is Transcriptional regulatory protein MoaR1 (moaR1) of Mycobacterium tuberculosis (strain ATCC 25618 / H37Rv).